Here is a 539-residue protein sequence, read N- to C-terminus: Transcription factor LG2 (539 aa).

A compositionally biased stretch (polar residues) spans 115-125 (MRQQQQLHSGN). Disordered regions lie at residues 115–140 (MRQQ…SAQN) and 181–246 (KPGL…KSRL). Low complexity-rich tracts occupy residues 126–137 (SQSVGSTTDSSS) and 192–205 (QQQH…QQQL). The segment covering 219-242 (TRKDGKSVDAKTERRLAQNREAAR) has biased composition (basic and acidic residues). A bZIP domain is found at 227-271 (DAKTERRLAQNREAARKSRLRKKAYVQNLETSRVRLQQIEQELQR). The tract at residues 229-249 (KTERRLAQNREAARKSRLRKK) is basic motif. The leucine-zipper stretch occupies residues 255-269 (LETSRVRLQQIEQEL). The region spanning 292-506 (AAMFDMEYAR…RALSNLWSSR (215 aa)) is the DOG1 domain. The segment at 513-539 (GTESVSPTGTELQPMHNQPQQNQYSGF) is disordered.

The protein belongs to the bZIP family. Interacts with NPR1/NH1 and NPR3/NH3.

It localises to the nucleus. In terms of biological role, transcriptional regulator involved in defense response. Acts as a transcriptional activator in vitro. The polypeptide is Transcription factor LG2 (Oryza sativa subsp. japonica (Rice)).